A 365-amino-acid chain; its full sequence is Eukaryotic translation initiation factor 3 subunit H (365 aa).

In terms of domain architecture, MPN spans 11–160; sequence VKVEALVVMK…LRAFRLSPKF (150 aa).

This sequence belongs to the eIF-3 subunit H family. Component of the eukaryotic translation initiation factor 3 (eIF-3) complex.

Its subcellular location is the cytoplasm. Functionally, component of the eukaryotic translation initiation factor 3 (eIF-3) complex, which is involved in protein synthesis of a specialized repertoire of mRNAs and, together with other initiation factors, stimulates binding of mRNA and methionyl-tRNAi to the 40S ribosome. The eIF-3 complex specifically targets and initiates translation of a subset of mRNAs involved in cell proliferation. The chain is Eukaryotic translation initiation factor 3 subunit H from Aspergillus clavatus (strain ATCC 1007 / CBS 513.65 / DSM 816 / NCTC 3887 / NRRL 1 / QM 1276 / 107).